The primary structure comprises 137 residues: Fluoride-specific ion channel FluC 1 (137 aa).

A run of 4 helical transmembrane segments spans residues 4–24, 37–57, 67–87, and 98–118; these read LIYI…YYLG, LATL…TTYI, VITG…TFSV, and WGIA…MSGL. Na(+) contacts are provided by Gly77 and Thr80.

The protein belongs to the fluoride channel Fluc/FEX (TC 1.A.43) family.

The protein resides in the cell membrane. It catalyses the reaction fluoride(in) = fluoride(out). Its activity is regulated as follows. Na(+) is not transported, but it plays an essential structural role and its presence is essential for fluoride channel function. Fluoride-specific ion channel. Important for reducing fluoride concentration in the cell, thus reducing its toxicity. The sequence is that of Fluoride-specific ion channel FluC 1 from Bacillus cereus (strain ZK / E33L).